The primary structure comprises 341 residues: Hyaluronan and proteoglycan link protein 2 (341 aa).

The N-terminal stretch at 1-27 (MPSRIPLPAFCCFLLPWAFTSFHKALG) is a signal peptide. In terms of domain architecture, Ig-like V-type spans 35-143 (PHYLLPPIHE…GIEDESVALT (109 aa)). Cystine bridges form between Cys-58–Cys-129, Cys-171–Cys-241, Cys-195–Cys-216, Cys-266–Cys-337, and Cys-291–Cys-312. Link domains follow at residues 149 to 243 (VVFP…FCFT) and 246 to 339 (LAGQ…YCYA).

Belongs to the HAPLN family. In terms of tissue distribution, brain. Predominantly expressed by neurons. Colocalizes with versican V2 in developing and adult cerebellar white matter and at the nodes of Ranvier.

The protein resides in the secreted. It localises to the extracellular space. The protein localises to the extracellular matrix. Its function is as follows. Mediates a firm binding of versican V2 to hyaluronic acid. May play a pivotal role in the formation of the hyaluronan-associated matrix in the central nervous system (CNS) which facilitates neuronal conduction and general structural stabilization. Binds to hyaluronic acid. This Mus musculus (Mouse) protein is Hyaluronan and proteoglycan link protein 2 (Hapln2).